Here is a 447-residue protein sequence, read N- to C-terminus: Tubulin beta chain (447 aa).

GTP is bound by residues glutamine 11, glutamate 69, serine 138, glycine 142, threonine 143, glycine 144, asparagine 204, and asparagine 226. Glutamate 69 serves as a coordination point for Mg(2+).

It belongs to the tubulin family. Dimer of alpha and beta chains. A typical microtubule is a hollow water-filled tube with an outer diameter of 25 nm and an inner diameter of 15 nM. Alpha-beta heterodimers associate head-to-tail to form protofilaments running lengthwise along the microtubule wall with the beta-tubulin subunit facing the microtubule plus end conferring a structural polarity. Microtubules usually have 13 protofilaments but different protofilament numbers can be found in some organisms and specialized cells. The cofactor is Mg(2+).

Its subcellular location is the cytoplasm. It localises to the cytoskeleton. Functionally, tubulin is the major constituent of microtubules, a cylinder consisting of laterally associated linear protofilaments composed of alpha- and beta-tubulin heterodimers. Microtubules grow by the addition of GTP-tubulin dimers to the microtubule end, where a stabilizing cap forms. Below the cap, tubulin dimers are in GDP-bound state, owing to GTPase activity of alpha-tubulin. This chain is Tubulin beta chain (TUB2), found in Penicillium digitatum (Green mold).